A 92-amino-acid chain; its full sequence is Small ribosomal subunit protein bS20 (92 aa).

Positions 1 to 25 are disordered; sequence MANSAQARKRARQAAKANSHNSALR.

It belongs to the bacterial ribosomal protein bS20 family.

In terms of biological role, binds directly to 16S ribosomal RNA. The chain is Small ribosomal subunit protein bS20 from Paraburkholderia phymatum (strain DSM 17167 / CIP 108236 / LMG 21445 / STM815) (Burkholderia phymatum).